Reading from the N-terminus, the 328-residue chain is Biotin synthase (328 aa).

The Radical SAM core domain maps to 48–275; it reads NRIQLSKLLN…KSHVRLTAGR (228 aa). Cysteine 63, cysteine 67, and cysteine 70 together coordinate [4Fe-4S] cluster. [2Fe-2S] cluster contacts are provided by cysteine 107, cysteine 138, cysteine 198, and arginine 270.

The protein belongs to the radical SAM superfamily. Biotin synthase family. As to quaternary structure, homodimer. It depends on [4Fe-4S] cluster as a cofactor. [2Fe-2S] cluster is required as a cofactor.

The catalysed reaction is (4R,5S)-dethiobiotin + (sulfur carrier)-SH + 2 reduced [2Fe-2S]-[ferredoxin] + 2 S-adenosyl-L-methionine = (sulfur carrier)-H + biotin + 2 5'-deoxyadenosine + 2 L-methionine + 2 oxidized [2Fe-2S]-[ferredoxin]. Its pathway is cofactor biosynthesis; biotin biosynthesis; biotin from 7,8-diaminononanoate: step 2/2. Catalyzes the conversion of dethiobiotin (DTB) to biotin by the insertion of a sulfur atom into dethiobiotin via a radical-based mechanism. The protein is Biotin synthase of Brucella ovis (strain ATCC 25840 / 63/290 / NCTC 10512).